Reading from the N-terminus, the 229-residue chain is UPF0758 protein Ppro_3582 (229 aa).

Positions 1–20 (MCPGIREWPEDERPREKMLR) are disordered. The segment covering 7–19 (EWPEDERPREKML) has biased composition (basic and acidic residues). The 123-residue stretch at 107-229 (RFTSPRQVFD…YLSFVERGVL (123 aa)) folds into the MPN domain. Residues H178, H180, and D191 each coordinate Zn(2+). Residues 178-191 (HNHPTGDPTPSQED) carry the JAMM motif motif.

Belongs to the UPF0758 family.

The protein is UPF0758 protein Ppro_3582 of Pelobacter propionicus (strain DSM 2379 / NBRC 103807 / OttBd1).